Here is a 372-residue protein sequence, read N- to C-terminus: Proline-rich P65 protein homolog (372 aa).

Positions 1 to 37 (MEKNRSAFQQNQQASNQPFNQDQNQYYQDPNQQQFNQ) are enriched in low complexity. The segment at 1–100 (MEKNRSAFQQ…GFDPNQQYYQ (100 aa)) is disordered. A run of 13 repeats spans residues 29 to 40 (DPNQQQFNQSGF), 41 to 52 (DPNQQQFNQPGF), 53 to 60 (DPNQQYYQ), 61 to 72 (DPNQQQFNQAGF), 73 to 80 (DQNQQYYQ), 81 to 92 (DPNQQQFNQPGF), 93 to 100 (DPNQQYYQ), 101 to 112 (DPNQQQFNQAGF), 113 to 119 (DQNQYYQ), 120 to 131 (DPNQQQFNQSGF), 132 to 138 (DQNQYYQ), 139 to 150 (DPNQQQFNQPSF), and 151 to 162 (DLNNQQFNQPGF). The segment covering 38–49 (SGFDPNQQQFNQ) has biased composition (polar residues). Residues 53–100 (DPNQQYYQDPNQQQFNQAGFDQNQQYYQDPNQQQFNQPGFDPNQQYYQ) are compositionally biased toward low complexity. Positions 122–150 (NQQQFNQSGFDQNQYYQDPNQQQFNQPSF) are disordered.

The polypeptide is Proline-rich P65 protein homolog (Mycoplasma genitalium (strain ATCC 33530 / DSM 19775 / NCTC 10195 / G37) (Mycoplasmoides genitalium)).